The primary structure comprises 174 residues: MHCPFCQHSDTRVIDSRVSEDGTTIRRRRECEACGERFSTLETIELKLPTVVKSDGGREAFDARKLRTSFDRALQKRPVAEEQIEAAVRSVVHQLRMSGEREVGSLRVGEYVMVELRKLDHVGYVRFASVYRSFQDVADFREEIEKLERELPVGSEQLPLLEVALERAGKPGKR.

A zinc finger lies at 3-34; it reads CPFCQHSDTRVIDSRVSEDGTTIRRRRECEAC. Residues 49-139 form the ATP-cone domain; that stretch reads PTVVKSDGGR…VYRSFQDVAD (91 aa).

This sequence belongs to the NrdR family. It depends on Zn(2+) as a cofactor.

Its function is as follows. Negatively regulates transcription of bacterial ribonucleotide reductase nrd genes and operons by binding to NrdR-boxes. The polypeptide is Transcriptional repressor NrdR (Xanthomonas oryzae pv. oryzae (strain MAFF 311018)).